The following is a 451-amino-acid chain: Uronate isomerase (451 aa).

Belongs to the metallo-dependent hydrolases superfamily. Uronate isomerase family.

It carries out the reaction D-glucuronate = D-fructuronate. It catalyses the reaction aldehydo-D-galacturonate = keto-D-tagaturonate. It participates in carbohydrate metabolism; pentose and glucuronate interconversion. This Thermotoga sp. (strain RQ2) protein is Uronate isomerase.